The primary structure comprises 151 residues: Chaperonin GroEL (151 aa).

41-45 (DGTTT) contacts ATP.

The protein belongs to the chaperonin (HSP60) family. Forms a cylinder of 14 subunits composed of two heptameric rings stacked back-to-back. Interacts with the co-chaperonin GroES.

The protein localises to the cytoplasm. The enzyme catalyses ATP + H2O + a folded polypeptide = ADP + phosphate + an unfolded polypeptide.. In terms of biological role, together with its co-chaperonin GroES, plays an essential role in assisting protein folding. The GroEL-GroES system forms a nano-cage that allows encapsulation of the non-native substrate proteins and provides a physical environment optimized to promote and accelerate protein folding. This chain is Chaperonin GroEL, found in Mycobacterium marinum.